A 445-amino-acid chain; its full sequence is DNA repair protein RadA (445 aa).

The C4-type zinc finger occupies 10 to 27 (CSNCANISNKWSGQCFDC). 90-97 (GEPGIGKS) is a binding site for ATP. The RadA KNRFG motif motif lies at 249–253 (KNRFG). The interval 348–445 (EIYLSIAGGL…HLQELKEIIK (98 aa)) is lon-protease-like.

Belongs to the RecA family. RadA subfamily.

Its function is as follows. DNA-dependent ATPase involved in processing of recombination intermediates, plays a role in repairing DNA breaks. Stimulates the branch migration of RecA-mediated strand transfer reactions, allowing the 3' invading strand to extend heteroduplex DNA faster. Binds ssDNA in the presence of ADP but not other nucleotides, has ATPase activity that is stimulated by ssDNA and various branched DNA structures, but inhibited by SSB. Does not have RecA's homology-searching function. This chain is DNA repair protein RadA, found in Rickettsia prowazekii (strain Madrid E).